We begin with the raw amino-acid sequence, 818 residues long: Catenin beta (818 aa).

Polar residues-rich tracts occupy residues 1-21 (METYQQMNSGSGPRSVGTPQG) and 48-66 (GDSGIQSGATTQAPPSVSS). Disordered regions lie at residues 1-24 (METYQQMNSGSGPRSVGTPQGQYM) and 48-71 (GDSGIQSGATTQAPPSVSSKHGLD). ARM repeat units follow at residues 164–203 (NYQDDADLATRAIPELTKLLNDEDQVVVSQAAMMVHQLSK), 248–287 (RQGLLTIFKSGGIPALVKLLSSPVESVLFYAITTLHNLLL), 412–451 (DAATKSSDIEGLLQMLVQLLASNDINIVTCAAGILSNLTC), 454–495 (QRNK…HLTS), 501–541 (EMAQ…NLAL), 543–582 (PANHAPLREHGAIPRIVQLLIRAHQDTQRRATAGSGNTSA), and 648–687 (KEGAEMIEQEGTTAPLTELLHSRNEGVATYAAAVLFRMSE). The disordered stretch occupies residues 732-818 (QGFRGYQGSG…QMAAWFDTDL (87 aa)).

This sequence belongs to the beta-catenin family.

It is found in the cytoplasm. Its subcellular location is the cytoskeleton. Binds to the cytoplasmic domain of the cell-cell adhesion molecule E-cadherin, and perhaps to other (membrane) proteins. The association of catenins to cadherins produces a complex which is linked to the actin filament network, and which seems to be of primary importance for cadherins cell-adhesion properties. In Urechis caupo (Innkeeper worm), this protein is Catenin beta.